The primary structure comprises 152 residues: Nucleoside diphosphate kinase (152 aa).

The ATP site is built by K11, F59, R87, T93, R104, and N114. Catalysis depends on H117, which acts as the Pros-phosphohistidine intermediate.

It belongs to the NDK family. In terms of assembly, homotetramer. Mg(2+) serves as cofactor.

It localises to the cytoplasm. The catalysed reaction is a 2'-deoxyribonucleoside 5'-diphosphate + ATP = a 2'-deoxyribonucleoside 5'-triphosphate + ADP. It carries out the reaction a ribonucleoside 5'-diphosphate + ATP = a ribonucleoside 5'-triphosphate + ADP. Functionally, major role in the synthesis of nucleoside triphosphates other than ATP. The ATP gamma phosphate is transferred to the NDP beta phosphate via a ping-pong mechanism, using a phosphorylated active-site intermediate. In Prochlorococcus marinus (strain MIT 9515), this protein is Nucleoside diphosphate kinase.